A 207-amino-acid polypeptide reads, in one-letter code: M-zodatoxin-Lt4a (207 aa).

Residues 1–22 form the signal peptide; the sequence is MKFSIIALALAVAFVCVAESRS. The propeptide occupies 23–43; sequence EEEGYDVSEEIQAEELEEAER. The Processing quadruplet motif 1 motif lies at 40-43; the sequence is EAER. At glutamine 61 the chain carries Glutamine amide. An Inverted processing quadruplet motif 1 motif is present at residues 63–66; the sequence is REDS. The propeptide occupies 63–71; it reads REDSEEAGR. Residues 68-71 carry the Processing quadruplet motif 2 motif; it reads EAGR. A Glutamine amide modification is found at glutamine 89. The short motif at 91–94 is the Inverted processing quadruplet motif 2 element; sequence REDS. A propeptide spanning residues 91 to 99 is cleaved from the precursor; that stretch reads REDSEEAGR. The Processing quadruplet motif 3 motif lies at 96–99; sequence EAGR. At glutamine 117 the chain carries Glutamine amide. Residues 119 to 122 carry the Inverted processing quadruplet motif 3 motif; that stretch reads REDS. A propeptide spanning residues 119 to 127 is cleaved from the precursor; it reads REDSEEAGR. Positions 124-127 match the Processing quadruplet motif 4 motif; it reads EAGR. Glutamine 145 is modified (glutamine amide). Positions 147–150 match the Inverted processing quadruplet motif 4 motif; it reads REDS. Residues 147-155 constitute a propeptide that is removed on maturation; sequence REDSEEAGR. The Processing quadruplet motif 5 signature appears at 152 to 155; sequence EAGR. Glutamine 173 carries the glutamine amide modification. The short motif at 175–178 is the Inverted processing quadruplet motif 5 element; sequence REDT. Positions 175-182 are excised as a propeptide; it reads REDTEEAR. Positions 179–182 match the Processing quadruplet motif 6 motif; sequence EEAR. At phenylalanine 206 the chain carries Phenylalanine amide.

This sequence belongs to the cationic peptide 03 (latarcin) family. 04 subfamily. Cleavage of the propeptide depends on the processing quadruplet motif (PQM) (XXXR, with at least one of X being E) and the inverted PQM (RXXX, with at least one of X being E). In terms of tissue distribution, expressed by the venom gland.

Its subcellular location is the secreted. In terms of biological role, M-zodatoxin-Lt4a: Has antimicrobial activity against Gram-positive bacteria (A.globiformis VKM Ac-1112 (MIC=0.3 uM), and B.subtilis VKM B-501 (MIC=1.1 uM)), Gram-negative bacteria (E.coli DH5-alpha (MIC=4.5 uM), E.coli MH1 (MIC=3.2 uM), and P.aeruginosa PAO1 (MIC&gt;35 uM)), and yeasts (P.pastoris GS115 (MIC=36 uM), and S.cerevisiae Y190 (MIC=18 uM)). Does not have hemolytic activity against rabbit erythrocytes. Causes paralysis, but is not lethal when injected into insect (M.domestica) larvae. Functionally, shows no antimicrobial activity against Gram-positive bacterium B.subtilis B-501 or Gram-negative bacterium E.coli DH5-alpha at concentrations up to 20 uM. Its function is as follows. Shows no antimicrobial activity against Gram-positive bacterium B.subtilis B-501 or Gram-negative bacterium E.coli DH5-alpha at concentrations up to 20 uM. Shows no toxicity towards insect (S.carnaria) larvae. The sequence is that of M-zodatoxin-Lt4a from Lachesana tarabaevi (Spider).